We begin with the raw amino-acid sequence, 501 residues long: Calcium-dependent protein kinase 4 (501 aa).

One can recognise a Protein kinase domain in the interval 25–283; that stretch reads YLLGKKLGQG…AHEALCHPWI (259 aa). Residues 31 to 39 and K54 contribute to the ATP site; that span reads LGQGQFGTT. D149 serves as the catalytic Proton acceptor. A Phosphoserine modification is found at S189. Residues 289–319 are autoinhibitory domain; the sequence is APDKPLDPAVLSRLKQFSQMNKIKKMALRVI. EF-hand domains follow at residues 326 to 361, 362 to 397, 398 to 433, and 437 to 467; these read EEIG…VGSE, LMES…INKM, EREE…FGLC, and LDDM…GDGV. 20 residues coordinate Ca(2+): D339, D341, S343, T345, E350, D375, D377, S379, T381, E386, D411, D413, S415, Y417, E422, D445, D447, D449, K451, and E456.

The protein belongs to the protein kinase superfamily. Ser/Thr protein kinase family. CDPK subfamily. In terms of assembly, interacts with Di19.

It localises to the cytoplasm. It is found in the nucleus. It catalyses the reaction L-seryl-[protein] + ATP = O-phospho-L-seryl-[protein] + ADP + H(+). It carries out the reaction L-threonyl-[protein] + ATP = O-phospho-L-threonyl-[protein] + ADP + H(+). With respect to regulation, activated by calcium. Autophosphorylation may play an important role in the regulation of the kinase activity. May play a role in signal transduction pathways that involve calcium as a second messenger. Functions as a regulator of the calcium-mediated abscisic acid (ABA) signaling pathway. Phosphorylates ABA-responsive transcription factors ABF1 and ABF4 in vitro. Phosphorylates the nuclear zinc finger Di19 in vitro. This is Calcium-dependent protein kinase 4 (CPK4) from Arabidopsis thaliana (Mouse-ear cress).